A 298-amino-acid chain; its full sequence is MAEEKKAPISVWTTVKPFVNGGASGMLATCVIQPIDMIKVRIQLGQGSAASITTNMLKNEGVGAFYKGLSAGLLRQATYTTARLGSFKLLTAKAIESNDGKPLPLYQKALCGLTAGAIGACVGSPADLALIRMQADNTLPLAQRRNYTNAFHALTRISADEGVLALWKGCGPTVVRAMALNMGMLASYDQSAEYMRDNLGFGEMSTVVGASAVSGFCAAACSLPFDFVKTQIQKMQPDAQGKYPYTGSLDCAMKTLKEGGPLKFYSGFPVYCVRIAPHVMMTWIFLNQITKFQKKIGM.

Solcar repeat units lie at residues 12-93, 103-194, and 202-292; these read WTTV…LTAK, LPLY…SAEY, and GEMS…ITKF. 6 helical membrane-spanning segments follow: residues 18–38, 68–88, 109–129, 169–189, 208–228, and 268–288; these read FVNG…IDMI, GLSA…GSFK, ALCG…ADLA, GCGP…ASYD, VGAS…FDFV, and FPVY…FLNQ.

Belongs to the mitochondrial carrier (TC 2.A.29) family. As to expression, highly expressed in flower buds and at lower levels in roots, leaves and stems.

It localises to the mitochondrion inner membrane. Functionally, catalyzes the transport of dicarboxylates, such as oxoglutarate, oxaloacetate, malate, and succinate, and of tricarboxylates, such as citrate, isocitrate, cis-aconitate, and trans-aconitate by a counter-exchange mechanism across the inner mitochondrial membrane. Substrate preference in reconstituted proteoliposomes is oxaloacetate &gt; malonate &gt; malate &gt; maleate &gt; succinate &gt; oxoglutarate &gt; citrate &gt; trans-aconitate &gt; cis-aconitate &gt; sulfate &gt; isocitrate. May be important for plant metabolic functions requiring organic acid flux to or from the mitochondria, such as nitrogen assimilation, export of reducing equivalents from the mitochondria, and fatty acid elongation. The protein is Mitochondrial dicarboxylate/tricarboxylate transporter DTC (DTC) of Arabidopsis thaliana (Mouse-ear cress).